Consider the following 453-residue polypeptide: Acyl-coenzyme A thioesterase 2, mitochondrial (453 aa).

The transit peptide at 1–42 directs the protein to the mitochondrion; it reads MVASSFAVLRASRLCQWGWKSWTQLSGPPPLSTGGRTTFART. Residue Lys83 is modified to N6-acetyllysine. Catalysis depends on charge relay system residues Ser273, Asp365, and His399. Lys447 carries the N6-succinyllysine modification.

This sequence belongs to the C/M/P thioester hydrolase family. Monomer. Post-translationally, the N-terminus is blocked. In terms of tissue distribution, constitutively expressed in heart and brown fat. Strongly induced in liver, and weakly in kidney, in peroxisome proliferator treated rat.

The protein resides in the mitochondrion matrix. It catalyses the reaction hexadecanoyl-CoA + H2O = hexadecanoate + CoA + H(+). The catalysed reaction is tetradecanoyl-CoA + H2O = tetradecanoate + CoA + H(+). It carries out the reaction octadecanoyl-CoA + H2O = octadecanoate + CoA + H(+). The enzyme catalyses eicosanoyl-CoA + H2O = eicosanoate + CoA + H(+). It catalyses the reaction decanoyl-CoA + H2O = decanoate + CoA + H(+). The catalysed reaction is dodecanoyl-CoA + H2O = dodecanoate + CoA + H(+). It carries out the reaction (9Z)-octadecenoyl-CoA + H2O = (9Z)-octadecenoate + CoA + H(+). The enzyme catalyses (9Z)-hexadecenoyl-CoA + H2O = (9Z)-hexadecenoate + CoA + H(+). It catalyses the reaction (9E)-octadecenoyl-CoA + H2O = (9E)-octadecenoate + CoA + H(+). The catalysed reaction is (9Z,12Z)-octadecadienoyl-CoA + H2O = (9Z,12Z)-octadecadienoate + CoA + H(+). Its pathway is lipid metabolism; fatty acid metabolism. Its function is as follows. Catalyzes the hydrolysis of acyl-CoAs into free fatty acids and coenzyme A (CoASH), regulating their respective intracellular levels. Displays higher activity toward long chain acyl CoAs (C14-C20). The enzyme is involved in enhancing the hepatic fatty acid oxidation in mitochondria. The sequence is that of Acyl-coenzyme A thioesterase 2, mitochondrial (Acot2) from Rattus norvegicus (Rat).